Consider the following 225-residue polypeptide: Polyadenylate-binding protein 2 (225 aa).

Positions 1-36 (MADEDISLNEDQLLESMEETNGEQETEIVTETEEEG) are enriched in acidic residues. The segment at 1–42 (MADEDISLNEDQLLESMEETNGEQETEIVTETEEEGSMQIDP) is disordered. Residues 14–74 (LESMEETNGE…QSEVDKQMAG (61 aa)) adopt a coiled-coil conformation. One can recognise an RRM domain in the interval 96–173 (RSVYVGNVDY…RQIKVMSKRT (78 aa)).

Its subcellular location is the nucleus. It is found in the cytoplasm. Its function is as follows. Involved in the 3'-end formation of mRNA precursors (pre-mRNA) by the addition of a poly(A) tail of 200-250 nt to the upstream cleavage product. Stimulates poly(A) polymerase (PAPOLA) conferring processivity on the poly(A) tail elongation reaction and also controls the poly(A) tail length. Increases the affinity of poly(A) polymerase for RNA. Binds to poly(A) and to poly(G) with high affinity. May protect the poly(A) tail from degradation. This is Polyadenylate-binding protein 2 from Drosophila pseudoobscura pseudoobscura (Fruit fly).